A 93-amino-acid chain; its full sequence is Small ribosomal subunit protein uS19 (93 aa).

The protein belongs to the universal ribosomal protein uS19 family.

Protein S19 forms a complex with S13 that binds strongly to the 16S ribosomal RNA. This Nitratidesulfovibrio vulgaris (strain DSM 19637 / Miyazaki F) (Desulfovibrio vulgaris) protein is Small ribosomal subunit protein uS19.